We begin with the raw amino-acid sequence, 481 residues long: Argininosuccinate lyase (481 aa).

The protein belongs to the lyase 1 family. Argininosuccinate lyase subfamily.

The protein resides in the cytoplasm. The catalysed reaction is 2-(N(omega)-L-arginino)succinate = fumarate + L-arginine. The protein operates within amino-acid biosynthesis; L-arginine biosynthesis; L-arginine from L-ornithine and carbamoyl phosphate: step 3/3. In Methanococcus maripaludis (strain C5 / ATCC BAA-1333), this protein is Argininosuccinate lyase.